A 222-amino-acid chain; its full sequence is Superoxide dismutase [Mn], mitochondrial (222 aa).

A mitochondrion-targeting transit peptide spans Met1 to Gln24. Mn(2+) is bound at residue His50. A 3'-nitrotyrosine modification is found at Tyr58. N6-acetyllysine; alternate occurs at positions 68 and 75. An N6-succinyllysine; alternate mark is found at Lys68 and Lys75. Mn(2+) is bound at residue His98. An N6-acetyllysine; alternate mark is found at Lys122 and Lys130. N6-succinyllysine; alternate is present on residues Lys122 and Lys130. The Mn(2+) site is built by Asp183 and His187. Position 202 is an N6-acetyllysine (Lys202).

This sequence belongs to the iron/manganese superoxide dismutase family. In terms of assembly, homotetramer. The cofactor is Mn(2+). Nitrated under oxidative stress. Nitration coupled with oxidation inhibits the catalytic activity. Post-translationally, acetylation at Lys-122 decreases enzymatic activity. Deacetylated by SIRT3 upon exposure to ionizing radiations or after long fasting. In terms of processing, polyubiquitinated; leading to proteasomal degradation. Deubiquitinated by USP36 which increases protein stability.

It is found in the mitochondrion matrix. It carries out the reaction 2 superoxide + 2 H(+) = H2O2 + O2. Destroys superoxide anion radicals which are normally produced within the cells and which are toxic to biological systems. The protein is Superoxide dismutase [Mn], mitochondrial (SOD2) of Bos taurus (Bovine).